The chain runs to 563 residues: Delta-1-pyrroline-5-carboxylate dehydrogenase, mitochondrial (563 aa).

Residues 1–23 constitute a mitochondrion transit peptide; it reads MLPPALLRRSLLSYAWRGSGLRW. At Lys30 the chain carries N6-succinyllysine. A Phosphoserine modification is found at Ser43. The residue at position 51 (Lys51) is an N6-acetyllysine. Residues Lys92, Lys98, Lys113, Lys129, and Lys174 each carry the N6-acetyllysine; alternate modification. An N6-succinyllysine; alternate mark is found at Lys92, Lys98, Lys113, Lys129, and Lys174. NAD(+) contacts are provided by residues Ser207, Lys232, and 285 to 289; that span reads GSVPT. Glu313 (proton acceptor) is an active-site residue. The residue at position 317 (Lys317) is an N6-acetyllysine. Lys346 carries the post-translational modification N6-succinyllysine. Cys347 serves as the catalytic Nucleophile. Residues Lys364 and Lys375 each carry the N6-acetyllysine modification. Lys394 carries the post-translational modification N6-succinyllysine. Residue Glu446 participates in NAD(+) binding. Lys461 carries the post-translational modification N6-acetyllysine. Residue Lys508 is modified to N6-acetyllysine; alternate. Lys508 carries the N6-succinyllysine; alternate modification. Residue Ser512 participates in substrate binding.

Belongs to the aldehyde dehydrogenase family. As to quaternary structure, homodimer.

Its subcellular location is the mitochondrion matrix. The enzyme catalyses L-glutamate 5-semialdehyde + NAD(+) + H2O = L-glutamate + NADH + 2 H(+). The protein operates within amino-acid degradation; L-proline degradation into L-glutamate; L-glutamate from L-proline: step 2/2. Irreversible conversion of delta-1-pyrroline-5-carboxylate (P5C), derived either from proline or ornithine, to glutamate. This is a necessary step in the pathway interconnecting the urea and tricarboxylic acid cycles. The preferred substrate is glutamic gamma-semialdehyde, other substrates include succinic, glutaric and adipic semialdehydes. The polypeptide is Delta-1-pyrroline-5-carboxylate dehydrogenase, mitochondrial (Aldh4a1) (Rattus norvegicus (Rat)).